The sequence spans 271 residues: Formamidopyrimidine-DNA glycosylase (271 aa).

Residue proline 2 is the Schiff-base intermediate with DNA of the active site. Glutamate 3 (proton donor) is an active-site residue. Catalysis depends on lysine 57, which acts as the Proton donor; for beta-elimination activity. Residues histidine 90, arginine 109, and lysine 151 each coordinate DNA. The segment at 236–270 (HVYGRGGETCTSCGNLLSEIRLGQRTTVFCGICQT) adopts an FPG-type zinc-finger fold. The Proton donor; for delta-elimination activity role is filled by arginine 260.

Belongs to the FPG family. As to quaternary structure, monomer. Zn(2+) is required as a cofactor.

It carries out the reaction Hydrolysis of DNA containing ring-opened 7-methylguanine residues, releasing 2,6-diamino-4-hydroxy-5-(N-methyl)formamidopyrimidine.. The catalysed reaction is 2'-deoxyribonucleotide-(2'-deoxyribose 5'-phosphate)-2'-deoxyribonucleotide-DNA = a 3'-end 2'-deoxyribonucleotide-(2,3-dehydro-2,3-deoxyribose 5'-phosphate)-DNA + a 5'-end 5'-phospho-2'-deoxyribonucleoside-DNA + H(+). In terms of biological role, involved in base excision repair of DNA damaged by oxidation or by mutagenic agents. Acts as a DNA glycosylase that recognizes and removes damaged bases. Has a preference for oxidized purines, such as 7,8-dihydro-8-oxoguanine (8-oxoG). Has AP (apurinic/apyrimidinic) lyase activity and introduces nicks in the DNA strand. Cleaves the DNA backbone by beta-delta elimination to generate a single-strand break at the site of the removed base with both 3'- and 5'-phosphates. The polypeptide is Formamidopyrimidine-DNA glycosylase (Shewanella baltica (strain OS155 / ATCC BAA-1091)).